The sequence spans 82 residues: Three-finger toxin MicTx3 (82 aa).

Residues 1–21 (MKTLLLTLVVVTIMCLDLGYT) form the signal peptide. Intrachain disulfides connect Cys-24–Cys-44, Cys-38–Cys-59, Cys-63–Cys-74, and Cys-75–Cys-80.

It belongs to the three-finger toxin family. Short-chain subfamily. In terms of tissue distribution, expressed by the venom gland.

Its subcellular location is the secreted. Has been described to inhibit nicotinic acetylcholine receptor (nAChR) alpha-7/CHRNA7 subunits and to bind acetylcholine binding protein (AChBP) (Kd=29.5 nM). This chain is Three-finger toxin MicTx3, found in Micrurus corallinus (Brazilian coral snake).